The sequence spans 425 residues: Formyl-CoA:oxalate CoA-transferase (425 aa).

Residues 17–18 (QS), arginine 38, 72–75 (LDTK), 96–98 (NFG), arginine 104, and 136–139 (KVYE) contribute to the CoA site. Aspartate 168 acts as the Nucleophile in catalysis. 247–249 (GGQ) lines the substrate pocket.

Belongs to the CoA-transferase III family. Frc subfamily. Homodimer.

It carries out the reaction formyl-CoA + oxalate = oxalyl-CoA + formate. It functions in the pathway metabolic intermediate degradation; oxalate degradation; CO(2) and formate from oxalate: step 1/2. Functionally, involved in the catabolism of oxalate and in the adapatation to low pH via the induction of the oxalate-dependent acid tolerance response (ATR). Catalyzes the transfer of the CoA moiety from formyl-CoA to oxalate. The sequence is that of Formyl-CoA:oxalate CoA-transferase from Bradyrhizobium sp. (strain ORS 278).